Here is a 112-residue protein sequence, read N- to C-terminus: Cytochrome c 2.1 (112 aa).

Heme c contacts are provided by Cys20, Cys23, His24, and Met85.

This sequence belongs to the cytochrome c family. In terms of processing, binds 1 heme c group covalently per subunit.

It localises to the mitochondrion intermembrane space. Electron carrier protein. The oxidized form of the cytochrome c heme group can accept an electron from the heme group of the cytochrome c1 subunit of cytochrome reductase. Cytochrome c then transfers this electron to the cytochrome oxidase complex, the final protein carrier in the mitochondrial electron-transport chain. The sequence is that of Cytochrome c 2.1 from Caenorhabditis briggsae.